A 96-amino-acid polypeptide reads, in one-letter code: UPF0235 protein Acid345_4205 (96 aa).

This sequence belongs to the UPF0235 family.

This chain is UPF0235 protein Acid345_4205, found in Koribacter versatilis (strain Ellin345).